The following is a 358-amino-acid chain: Uroporphyrinogen decarboxylase (358 aa).

Substrate is bound by residues 29–33 (RQAGR), Asp-79, Tyr-155, Ser-210, and His-330.

The protein belongs to the uroporphyrinogen decarboxylase family. As to quaternary structure, homodimer.

It localises to the cytoplasm. The catalysed reaction is uroporphyrinogen III + 4 H(+) = coproporphyrinogen III + 4 CO2. It functions in the pathway porphyrin-containing compound metabolism; protoporphyrin-IX biosynthesis; coproporphyrinogen-III from 5-aminolevulinate: step 4/4. Functionally, catalyzes the decarboxylation of four acetate groups of uroporphyrinogen-III to yield coproporphyrinogen-III. This chain is Uroporphyrinogen decarboxylase, found in Bordetella petrii (strain ATCC BAA-461 / DSM 12804 / CCUG 43448).